The following is a 294-amino-acid chain: Complement C1q tumor necrosis factor-related protein 2 (294 aa).

A signal peptide spans 1-24 (MTIFKKVTTMISWVLLACALPCAA). Residues 42–156 (QLVCSLPGPQ…PGPCSCGSSR (115 aa)) form a disordered region. The region spanning 48-150 (PGPQGPPGPP…KGEPGLPGPC (103 aa)) is the Collagen-like domain. Pro residues predominate over residues 50–59 (PQGPPGPPGA). A compositionally biased stretch (basic and acidic residues) spans 75–87 (DGQDGQDGDRGDS). Over residues 105–129 (KGKAGAIGRAGPRGPKGVSGTPGKH) the composition is skewed to low complexity. The region spanning 154 to 290 (SSRAKSAFSV…GFLIYADQGD (137 aa)) is the C1q domain.

In terms of assembly, may interact with ERFE.

It localises to the secreted. Its function is as follows. Involved in the regulation of lipid metabolism in adipose tissue and liver. The chain is Complement C1q tumor necrosis factor-related protein 2 (C1qtnf2) from Mus musculus (Mouse).